A 247-amino-acid polypeptide reads, in one-letter code: UPF0246 protein LCABL_22600 (247 aa).

The protein belongs to the UPF0246 family.

The chain is UPF0246 protein LCABL_22600 from Lacticaseibacillus casei (strain BL23) (Lactobacillus casei).